Consider the following 491-residue polypeptide: Ketol-acid reductoisomerase (NADP(+)) (491 aa).

In terms of domain architecture, KARI N-terminal Rossmann spans 15-208; that stretch reads AQLGKCRFMG…GGHRAGVLES (194 aa). NADP(+) is bound by residues 45-48, arginine 68, arginine 76, serine 78, and 108-110; these read CGAQ and DKQ. The active site involves histidine 132. Glycine 158 is a binding site for NADP(+). KARI C-terminal knotted domains follow at residues 209 to 344 and 345 to 484; these read SFVA…TAPQ and YEGK…MTDM. The Mg(2+) site is built by aspartate 217, glutamate 221, glutamate 389, and glutamate 393. Serine 414 is a substrate binding site.

The protein belongs to the ketol-acid reductoisomerase family. Mg(2+) is required as a cofactor.

It carries out the reaction (2R)-2,3-dihydroxy-3-methylbutanoate + NADP(+) = (2S)-2-acetolactate + NADPH + H(+). The enzyme catalyses (2R,3R)-2,3-dihydroxy-3-methylpentanoate + NADP(+) = (S)-2-ethyl-2-hydroxy-3-oxobutanoate + NADPH + H(+). Its pathway is amino-acid biosynthesis; L-isoleucine biosynthesis; L-isoleucine from 2-oxobutanoate: step 2/4. It functions in the pathway amino-acid biosynthesis; L-valine biosynthesis; L-valine from pyruvate: step 2/4. In terms of biological role, involved in the biosynthesis of branched-chain amino acids (BCAA). Catalyzes an alkyl-migration followed by a ketol-acid reduction of (S)-2-acetolactate (S2AL) to yield (R)-2,3-dihydroxy-isovalerate. In the isomerase reaction, S2AL is rearranged via a Mg-dependent methyl migration to produce 3-hydroxy-3-methyl-2-ketobutyrate (HMKB). In the reductase reaction, this 2-ketoacid undergoes a metal-dependent reduction by NADPH to yield (R)-2,3-dihydroxy-isovalerate. The protein is Ketol-acid reductoisomerase (NADP(+)) of Escherichia fergusonii (strain ATCC 35469 / DSM 13698 / CCUG 18766 / IAM 14443 / JCM 21226 / LMG 7866 / NBRC 102419 / NCTC 12128 / CDC 0568-73).